Reading from the N-terminus, the 863-residue chain is DNA mismatch repair protein MutS 2 (863 aa).

ATP is bound at residue Gly626–Ser633.

The protein belongs to the DNA mismatch repair MutS family.

This protein is involved in the repair of mismatches in DNA. It is possible that it carries out the mismatch recognition step. This protein has a weak ATPase activity. This is DNA mismatch repair protein MutS 2 (mutS2) from Halobacterium salinarum (strain ATCC 700922 / JCM 11081 / NRC-1) (Halobacterium halobium).